A 910-amino-acid chain; its full sequence is Potassium/sodium hyperpolarization-activated cyclic nucleotide-gated channel 1 (910 aa).

The interval 1-75 is disordered; that stretch reads MEGGGKPNSA…PAGSFEDAEG (75 aa). At 1–131 the chain is on the cytoplasmic side; that stretch reads MEGGGKPNSA…WIIHPYSDFR (131 aa). A helical membrane pass occupies residues 132–153; that stretch reads FYWDLIMLIMMVGNLVIIPVGI. At 154-162 the chain is on the extracellular side; sequence TFFTEQTTT. The helical transmembrane segment at 163 to 183 threads the bilayer; sequence PWIIFNVASDTVFLLDLIMNF. The Cytoplasmic segment spans residues 184–204; the sequence is RTGTVNEDSSEIILDPKVIKM. The chain crosses the membrane as a helical span at residues 205–225; it reads NYLKSWFVVDFISSIPVDYIF. Residues 226-249 are Extracellular-facing; it reads LIVEKGMDSEVYKTARALRIVRFT. Residues 250 to 270 form a helical; Voltage-sensor membrane-spanning segment; it reads KILSLLRLLRLSRLIRYIHQW. At 271–284 the chain is on the cytoplasmic side; the sequence is EEIFHMTYDLASAV. The chain crosses the membrane as a helical span at residues 285–307; sequence VRIFNLIGMMLLLCHWDGCLQFL. Over 308 to 333 the chain is Extracellular; the sequence is VPLLQDFPPDCWVSLNEMVNDSWGKQ. N-linked (GlcNAc...) asparagine glycosylation is present at Asn-327. Residues 334–355 constitute an intramembrane region (pore-forming); that stretch reads YSYALFKAMSHMLCIGYGAQAP. The Selectivity filter motif lies at 347–351; it reads CIGYG. Residues 356–360 are Extracellular-facing; it reads VSMSD. Residues 361–381 form a helical membrane-spanning segment; it reads LWITMLSMIVGATCYAMFVGH. Over 382–910 the chain is Cytoplasmic; it reads ATALIQSLDS…AEKPRFASNL (529 aa). The 3',5'-cyclic AMP site is built by Gly-528, Glu-529, Cys-531, Arg-538, Thr-539, Arg-579, and Arg-582. Disordered regions lie at residues 634–681, 771–791, and 865–910; these read TALN…QPSA, QQQQ…VHKS, and QMSS…ASNL. Low complexity predominate over residues 639–680; it reads TSSTTTPTSRMRTQSPPVYTATSLSHSNLHSPSPSTQTPQPS. Residues 780-791 are compositionally biased toward polar residues; it reads GSSTPKNEVHKS. The span at 875–885 shows a compositional bias: pro residues; sequence RGVPPAPPPPA. A compositionally biased stretch (basic and acidic residues) spans 900 to 910; the sequence is DAEKPRFASNL.

Belongs to the potassium channel HCN family. Homotetramer. Heterotetramer with HCN2. The potassium channel is composed of a homo- or heterotetrameric complex of pore-forming subunits. Interacts with KCNE2. Interacts with the SH3 domain of CSK. Post-translationally, N-glycosylated. As to expression, predominantly expressed in brain. Highly expressed in apical dendrites of pyramidal neurons in the cortex, in the layer corresponding to the stratum lacunosum-moleculare in the hippocampus and in axons of basket cells in the cerebellum (at protein level). Expressed in a subset of elongated cells in taste buds.

Its subcellular location is the cell membrane. The catalysed reaction is Na(+)(in) = Na(+)(out). The enzyme catalyses K(+)(in) = K(+)(out). Activated by cAMP. cAMP binding causes a conformation change that leads to the assembly of an active tetramer and channel opening. Compared to other family members, cAMP has less stimulatory effect on HCN1 because part of the molecules already contain bound cAMP and form homotetramers when cAMP levels are low, this inherent tetramerization in HCN1 results in a weaker response to increased cAMP. Its function is as follows. Hyperpolarization-activated ion channel that are permeable to sodium and potassium ions. Exhibits weak selectivity for potassium over sodium ions. Contributes to the native pacemaker currents in heart (If) and in neurons (Ih). Participates in cerebellar mechanisms of motor learning. May mediate responses to sour stimuli. This is Potassium/sodium hyperpolarization-activated cyclic nucleotide-gated channel 1 (Hcn1) from Mus musculus (Mouse).